The following is a 177-amino-acid chain: Large ribosomal subunit protein uL6 (177 aa).

It belongs to the universal ribosomal protein uL6 family. In terms of assembly, part of the 50S ribosomal subunit.

In terms of biological role, this protein binds to the 23S rRNA, and is important in its secondary structure. It is located near the subunit interface in the base of the L7/L12 stalk, and near the tRNA binding site of the peptidyltransferase center. The chain is Large ribosomal subunit protein uL6 from Pectobacterium carotovorum subsp. carotovorum (strain PC1).